The sequence spans 132 residues: Small ribosomal subunit protein uS8 (132 aa).

Belongs to the universal ribosomal protein uS8 family. Part of the 30S ribosomal subunit. Contacts proteins S5 and S12.

One of the primary rRNA binding proteins, it binds directly to 16S rRNA central domain where it helps coordinate assembly of the platform of the 30S subunit. This Staphylococcus aureus (strain USA300) protein is Small ribosomal subunit protein uS8.